Here is a 397-residue protein sequence, read N- to C-terminus: UDP-GlcNAc:betaGal beta-1,3-N-acetylglucosaminyltransferase 7 (397 aa).

Residues 1 to 6 (MSLWKK) lie on the Cytoplasmic side of the membrane. A helical membrane pass occupies residues 7-26 (TLYKSVCLALALLVAVTVFQ). Topologically, residues 27–397 (RSVTPGQFLQ…LTCSVKFQVL (371 aa)) are lumenal. Residues Asn84, Asn90, Asn210, and Asn387 are each glycosylated (N-linked (GlcNAc...) asparagine).

It belongs to the glycosyltransferase 31 family. In terms of tissue distribution, strongly expressed in placenta and colon. Moderately expressed in lung, stomach, small intestine and kidney. Very weakly expressed in cerebrum, cerebellum, heart and testis.

The protein resides in the golgi apparatus membrane. It participates in protein modification; protein glycosylation. Its function is as follows. N-acetyl glucosamine (GlcNAc) transferase that catalyzes the transfer of GlcNAc via a beta1-&gt;3 linkage from UDP-GlcNAc to the non-reducing terminal galactose (Gal) in the linearly growing chain of N- and O-linked keratan sulfate proteoglycans. Cooperates with B4GALT4 galactosyltransferase and CHST6 and CHST1 sulfotransferases to construct and elongate mono- and disulfated disaccharide units [-&gt;3Galbeta1-&gt;4(6-sulfoGlcNAcbeta)1-&gt;] and [-&gt;3(6-sulfoGalbeta)1-&gt;4(6-sulfoGlcNAcbeta)1-&gt;] within keratan sulfate polymer. Involved in biosynthesis of N-linked keratan sulfate proteoglycans in cornea, with an impact on proteoglycan fibril organization and corneal transparency. May play a role in the maintenance of tissue architecture by suppressing cellular motility and invasion. The chain is UDP-GlcNAc:betaGal beta-1,3-N-acetylglucosaminyltransferase 7 (B3gnt7) from Mus musculus (Mouse).